The sequence spans 628 residues: Netrin-4 (628 aa).

The N-terminal stretch at 1 to 18 is a signal peptide; that stretch reads MGSCARLLLLWGCTVVAA. The 232-residue stretch at 30–261 folds into the Laminin N-terminal domain; that stretch reads CEKACNPRMG…AIYDFIVKGS (232 aa). N-linked (GlcNAc...) asparagine glycans are attached at residues Asn-56 and Asn-163. 12 cysteine pairs are disulfide-bonded: Cys-262–Cys-271, Cys-264–Cys-293, Cys-295–Cys-304, Cys-307–Cys-329, Cys-332–Cys-341, Cys-334–Cys-359, Cys-362–Cys-371, Cys-374–Cys-392, Cys-395–Cys-413, Cys-397–Cys-420, Cys-422–Cys-431, and Cys-434–Cys-446. 3 Laminin EGF-like domains span residues 262 to 331, 332 to 394, and 395 to 448; these read CFCN…ECRT, CKCN…ACKP, and CSCH…GCRP. Asn-353 is a glycosylation site (N-linked (GlcNAc...) asparagine). A glycan (N-linked (GlcNAc...) asparagine) is linked at Asn-483. 2 cysteine pairs are disulfide-bonded: Cys-506-Cys-576 and Cys-520-Cys-627. Residues 506 to 627 form the NTR domain; it reads CECKEQTLGN…KVMDILKREC (122 aa).

In terms of assembly, may form a homodimer. Expressed in kidney, spleen, mammary gland, aorta, heart, ovary, prostate and fetal spleen.

The protein resides in the secreted. It is found in the extracellular space. It localises to the extracellular matrix. Its subcellular location is the basement membrane. May play an important role in neural, kidney and vascular development. Promotes neurite elongation from olfactory bulb explants. In Homo sapiens (Human), this protein is Netrin-4 (NTN4).